A 393-amino-acid chain; its full sequence is 6-hydroxy-3-succinoylpyridine 3-monooxygenase HspB (393 aa).

FAD is bound by residues 6–35 (RVII…VLEA) and 277–287 (MRNGRVILIGD).

The protein belongs to the PheA/TfdB FAD monooxygenase family. As to quaternary structure, homodimer. Requires FAD as cofactor.

The enzyme catalyses 4-(6-hydroxypyridin-3-yl)-4-oxobutanoate + 2 NADH + O2 + 2 H(+) = 2,5-dihydroxypyridine + succinate semialdehyde + 2 NAD(+) + H2O. The protein operates within alkaloid degradation; nicotine degradation. With respect to regulation, inhibited by Cu(2+) and Zn(2+). In terms of biological role, involved in the nicotine degradation. Catalyzes the cleavage of 6-hydroxy-3-succinoylpyridine (HSP) by incorporation of oxygen at the 3-position to produce to 2,5-dihydroxypyridine (DHP) and succinic semialdehyde. This is 6-hydroxy-3-succinoylpyridine 3-monooxygenase HspB from Pseudomonas putida (strain DSM 28022 / S16).